A 127-amino-acid chain; its full sequence is Apolipoprotein C-IV (127 aa).

Positions 1–27 are cleaved as a signal peptide; it reads MSLLRNRLQDLPALCLCVLVLACIGAC.

This sequence belongs to the apolipoprotein C4 family.

Its subcellular location is the secreted. Functionally, may participate in lipoprotein metabolism. This Chlorocebus sabaeus (Green monkey) protein is Apolipoprotein C-IV (APOC4).